The primary structure comprises 58 residues: Large ribosomal subunit protein bL32c (58 aa).

A disordered region spans residues 1–23 (MAVPKKRTSKAKKNARKSVWKKK).

This sequence belongs to the bacterial ribosomal protein bL32 family.

It is found in the plastid. It localises to the chloroplast. This is Large ribosomal subunit protein bL32c (rpl32-A) from Trieres chinensis (Marine centric diatom).